Reading from the N-terminus, the 452-residue chain is Matrilin-3 (452 aa).

Positions 1–24 (MRRALGTLGCCLALLLPLLPAARG) are cleaved as a signal peptide. In terms of domain architecture, VWFA spans 54 to 229 (DLVFIIDSSR…GVIEKLTSKF (176 aa)). EGF-like domains follow at residues 235–275 (AANT…RTCS), 276–316 (AVDV…KTCS), 317–357 (AMDV…KTCS), and 358–398 (AVDV…KTCS). 12 disulfide bridges follow: C239/C250, C246/C259, C261/C274, C280/C291, C287/C300, C302/C315, C321/C332, C328/C341, C343/C356, C362/C373, C369/C382, and C384/C397. Residue N295 is glycosylated (N-linked (GlcNAc...) asparagine). The stretch at 419–451 (ALQDSVTSRLEALSTKLDEVSQKLQAYQDRQQV) forms a coiled coil.

Can form homooligomers (monomers, dimers, trimers and tetramers) and heterooligomers with matrilin-1. Expression is restricted to cartilaginous tissues.

Its subcellular location is the secreted. Functionally, major component of the extracellular matrix of cartilage and may play a role in the formation of extracellular filamentous networks. In Gallus gallus (Chicken), this protein is Matrilin-3 (MATN3).